Reading from the N-terminus, the 226-residue chain is Urease accessory protein UreF (226 aa).

This sequence belongs to the UreF family. In terms of assembly, ureD, UreF and UreG form a complex that acts as a GTP-hydrolysis-dependent molecular chaperone, activating the urease apoprotein by helping to assemble the nickel containing metallocenter of UreC. The UreE protein probably delivers the nickel.

It is found in the cytoplasm. Required for maturation of urease via the functional incorporation of the urease nickel metallocenter. The chain is Urease accessory protein UreF from Burkholderia mallei (strain NCTC 10247).